The chain runs to 121 residues: UPF0738 protein RBAM_011600 (121 aa).

This sequence belongs to the UPF0738 family.

In Bacillus velezensis (strain DSM 23117 / BGSC 10A6 / LMG 26770 / FZB42) (Bacillus amyloliquefaciens subsp. plantarum), this protein is UPF0738 protein RBAM_011600.